The following is a 689-amino-acid chain: Glycine--tRNA ligase beta subunit (689 aa).

Belongs to the class-II aminoacyl-tRNA synthetase family. As to quaternary structure, tetramer of two alpha and two beta subunits.

The protein localises to the cytoplasm. It carries out the reaction tRNA(Gly) + glycine + ATP = glycyl-tRNA(Gly) + AMP + diphosphate. The sequence is that of Glycine--tRNA ligase beta subunit from Shewanella piezotolerans (strain WP3 / JCM 13877).